A 315-amino-acid polypeptide reads, in one-letter code: Methionyl-tRNA formyltransferase (315 aa).

(6S)-5,6,7,8-tetrahydrofolate is bound at residue 110-113 (SLLP).

It belongs to the Fmt family.

The catalysed reaction is L-methionyl-tRNA(fMet) + (6R)-10-formyltetrahydrofolate = N-formyl-L-methionyl-tRNA(fMet) + (6S)-5,6,7,8-tetrahydrofolate + H(+). Functionally, attaches a formyl group to the free amino group of methionyl-tRNA(fMet). The formyl group appears to play a dual role in the initiator identity of N-formylmethionyl-tRNA by promoting its recognition by IF2 and preventing the misappropriation of this tRNA by the elongation apparatus. The sequence is that of Methionyl-tRNA formyltransferase from Mycolicibacterium paratuberculosis (strain ATCC BAA-968 / K-10) (Mycobacterium paratuberculosis).